Here is a 90-residue protein sequence, read N- to C-terminus: DNA-directed RNA polymerase subunit omega (90 aa).

The tract at residues 69–90 (RQEQQEQEAAELAAVSSIAHNR) is disordered.

The protein belongs to the RNA polymerase subunit omega family. The RNAP catalytic core consists of 2 alpha, 1 beta, 1 beta' and 1 omega subunit. When a sigma factor is associated with the core the holoenzyme is formed, which can initiate transcription.

The catalysed reaction is RNA(n) + a ribonucleoside 5'-triphosphate = RNA(n+1) + diphosphate. Promotes RNA polymerase assembly. Latches the N- and C-terminal regions of the beta' subunit thereby facilitating its interaction with the beta and alpha subunits. This Vibrio parahaemolyticus serotype O3:K6 (strain RIMD 2210633) protein is DNA-directed RNA polymerase subunit omega.